The sequence spans 285 residues: Bifunctional protein FolD (285 aa).

NADP(+) is bound by residues G164–S166, I189, and I230.

It belongs to the tetrahydrofolate dehydrogenase/cyclohydrolase family. Homodimer.

The catalysed reaction is (6R)-5,10-methylene-5,6,7,8-tetrahydrofolate + NADP(+) = (6R)-5,10-methenyltetrahydrofolate + NADPH. It carries out the reaction (6R)-5,10-methenyltetrahydrofolate + H2O = (6R)-10-formyltetrahydrofolate + H(+). The protein operates within one-carbon metabolism; tetrahydrofolate interconversion. In terms of biological role, catalyzes the oxidation of 5,10-methylenetetrahydrofolate to 5,10-methenyltetrahydrofolate and then the hydrolysis of 5,10-methenyltetrahydrofolate to 10-formyltetrahydrofolate. The polypeptide is Bifunctional protein FolD (Sulfurimonas denitrificans (strain ATCC 33889 / DSM 1251) (Thiomicrospira denitrificans (strain ATCC 33889 / DSM 1251))).